Reading from the N-terminus, the 90-residue chain is Albumin (90 aa).

At Ser5 the chain carries Phosphoserine. Ca(2+)-binding residues include Glu6 and Asp13. Positions Leu25–Ala90 constitute an Albumin domain. Position 61 is a phosphoserine (Ser61). 2 positions are modified to phosphothreonine: Thr62 and Thr64. Lys80 bears the N6-methyllysine mark.

It belongs to the ALB/AFP/VDB family. As to quaternary structure, interacts with FCGRT; this interaction regulates ALB homeostasis. Interacts with TASOR. In plasma, occurs in a covalently-linked complex with chromophore-bound alpha-1-microglobulin; this interaction does not prevent fatty acid binding to ALB. As to expression, plasma.

Its subcellular location is the secreted. Binds water, Ca(2+), Na(+), K(+), fatty acids, hormones, bilirubin and drugs. Its main function is the regulation of the colloidal osmotic pressure of blood. Major zinc transporter in plasma, typically binds about 80% of all plasma zinc. Major calcium and magnesium transporter in plasma, binds approximately 45% of circulating calcium and magnesium in plasma. Potentially has more than two calcium-binding sites and might additionally bind calcium in a non-specific manner. The shared binding site between zinc and calcium suggests a crosstalk between zinc and calcium transport in the blood. The rank order of affinity is zinc &gt; calcium &gt; magnesium. Binds to the bacterial siderophore enterobactin and inhibits enterobactin-mediated iron uptake of E.coli from ferric transferrin, and may thereby limit the utilization of iron and growth of enteric bacteria such as E.coli. Does not prevent iron uptake by the bacterial siderophore aerobactin. In Capra hircus (Goat), this protein is Albumin.